The chain runs to 237 residues: 2-C-methyl-D-erythritol 4-phosphate cytidylyltransferase (237 aa).

Belongs to the IspD/TarI cytidylyltransferase family. IspD subfamily.

The enzyme catalyses 2-C-methyl-D-erythritol 4-phosphate + CTP + H(+) = 4-CDP-2-C-methyl-D-erythritol + diphosphate. Its pathway is isoprenoid biosynthesis; isopentenyl diphosphate biosynthesis via DXP pathway; isopentenyl diphosphate from 1-deoxy-D-xylulose 5-phosphate: step 2/6. Its function is as follows. Catalyzes the formation of 4-diphosphocytidyl-2-C-methyl-D-erythritol from CTP and 2-C-methyl-D-erythritol 4-phosphate (MEP). This is 2-C-methyl-D-erythritol 4-phosphate cytidylyltransferase from Acaryochloris marina (strain MBIC 11017).